The primary structure comprises 1060 residues: Carbamoyl phosphate synthase large chain (1060 aa).

A carboxyphosphate synthetic domain region spans residues 1–401 (MPKRTDIRKI…SLLKACRSLE (401 aa)). 12 residues coordinate ATP: Arg129, Arg169, Gly175, Gly176, Arg208, Ile210, Glu215, Gly241, Ile242, His243, Gln284, and Glu298. Residues 133–327 (KQLMEELNQP…IAKLAAKIAV (195 aa)) form the ATP-grasp 1 domain. Positions 284, 298, and 300 each coordinate Mg(2+). Residues Gln284, Glu298, and Asn300 each coordinate Mn(2+). Residues 402 to 546 (IGVDHIKIAD…YSTYAVENES (145 aa)) form an oligomerization domain region. Residues 547-929 (LISDKASILV…ALYKAFEAAY (383 aa)) are carbamoyl phosphate synthetic domain. Residues 671 to 861 (EATLQALNIP…MAQVATKVIL (191 aa)) enclose the ATP-grasp 2 domain. Residues Arg707, Ala746, Leu748, Glu752, Gly777, Val778, His779, Ser780, Gln820, and Glu832 each contribute to the ATP site. Residues Gln820, Glu832, and Asn834 each contribute to the Mg(2+) site. Residues Gln820, Glu832, and Asn834 each coordinate Mn(2+). In terms of domain architecture, MGS-like spans 930–1060 (LHMPDYGNIV…SRAFTLKVLD (131 aa)). An allosteric domain region spans residues 930 to 1060 (LHMPDYGNIV…SRAFTLKVLD (131 aa)).

It belongs to the CarB family. In terms of assembly, composed of two chains; the small (or glutamine) chain promotes the hydrolysis of glutamine to ammonia, which is used by the large (or ammonia) chain to synthesize carbamoyl phosphate. Tetramer of heterodimers (alpha,beta)4. Requires Mg(2+) as cofactor. Mn(2+) is required as a cofactor.

It carries out the reaction hydrogencarbonate + L-glutamine + 2 ATP + H2O = carbamoyl phosphate + L-glutamate + 2 ADP + phosphate + 2 H(+). The catalysed reaction is hydrogencarbonate + NH4(+) + 2 ATP = carbamoyl phosphate + 2 ADP + phosphate + 2 H(+). It participates in amino-acid biosynthesis; L-arginine biosynthesis; carbamoyl phosphate from bicarbonate: step 1/1. It functions in the pathway pyrimidine metabolism; UMP biosynthesis via de novo pathway; (S)-dihydroorotate from bicarbonate: step 1/3. Functionally, large subunit of the glutamine-dependent carbamoyl phosphate synthetase (CPSase). CPSase catalyzes the formation of carbamoyl phosphate from the ammonia moiety of glutamine, carbonate, and phosphate donated by ATP, constituting the first step of 2 biosynthetic pathways, one leading to arginine and/or urea and the other to pyrimidine nucleotides. The large subunit (synthetase) binds the substrates ammonia (free or transferred from glutamine from the small subunit), hydrogencarbonate and ATP and carries out an ATP-coupled ligase reaction, activating hydrogencarbonate by forming carboxy phosphate which reacts with ammonia to form carbamoyl phosphate. The protein is Carbamoyl phosphate synthase large chain of Streptococcus agalactiae serotype III (strain NEM316).